The sequence spans 508 residues: Cytochrome P450 monooxygenase orf4 (508 aa).

Position 447 (C447) interacts with heme.

Belongs to the cytochrome P450 family. Requires heme as cofactor.

Its pathway is mycotoxin biosynthesis. Its function is as follows. Cytochrome P450 monooxygenase; part of the gene cluster that mediates the biosynthesis of brefeldin A (BFA), a protein transport inhibitor that shows antiviral, antifungal, and antitumor properties. The proposed biosynthesis of BFA involves formation of an acyclic polyketide chain that is differentially tailored throughout the backbone. The highly reducing polyketide synthase Bref-PKS is proposed to synthesize the precisely reduced octaketide precursor, which could then be directly offloaded by the thiohydrolase enzyme Bref-TH followed by a cytochrome P450 monooxygenase-mediated formation of the cyclopentane ring and macrocyclization to afford 7-deoxy BFA. Alternatively, the first ring annulation can also occur on the ACP-tethered intermediate before the thiohydrolase release and lactonization. The C7-hydroxylation by another cytochrome P450 monooxygenase is believed to be the final step in the process to obtain the final structure of BFA. In addition to the HRPKS Bref-PKS and the thiohydrolase Bref-TH, the brefeldin A biosynthesis cluster contains 4 cytochrome p450 monooxygenases (called orf3 to orf6), as well a the probable cluster-specific transcription regulator orf8. The polypeptide is Cytochrome P450 monooxygenase orf4 (Eupenicillium brefeldianum (Penicillium brefeldianum)).